The primary structure comprises 257 residues: MTDLKLAAQRALNLMDLTTLNDDDTDQKVIDLCRKAKSPAGLTAAVCIYPRFIPIARKTLREIGAADVRIATVTNFPHGNDDIEIAVAETRAAVAYGADEVDVVFPYRAFMAGNEQVGFDLVKACKEACGSQALLKVIIETGELKEEALIRRASEISIDAGADFIKTSTGKVPVNATPEAARIMMEVIKAKNPKVGFKPAGGVKDAAVAGQYLAMAEEILGKDWVSARTFRFGASSLLASLLATLGHGDKPANTSGY.

The active-site Proton donor/acceptor is aspartate 102. The active-site Schiff-base intermediate with acetaldehyde is the lysine 166. The Proton donor/acceptor role is filled by lysine 198.

It belongs to the DeoC/FbaB aldolase family. DeoC type 2 subfamily.

The protein resides in the cytoplasm. It catalyses the reaction 2-deoxy-D-ribose 5-phosphate = D-glyceraldehyde 3-phosphate + acetaldehyde. Its pathway is carbohydrate degradation; 2-deoxy-D-ribose 1-phosphate degradation; D-glyceraldehyde 3-phosphate and acetaldehyde from 2-deoxy-alpha-D-ribose 1-phosphate: step 2/2. Its function is as follows. Catalyzes a reversible aldol reaction between acetaldehyde and D-glyceraldehyde 3-phosphate to generate 2-deoxy-D-ribose 5-phosphate. This chain is Deoxyribose-phosphate aldolase, found in Aeromonas hydrophila subsp. hydrophila (strain ATCC 7966 / DSM 30187 / BCRC 13018 / CCUG 14551 / JCM 1027 / KCTC 2358 / NCIMB 9240 / NCTC 8049).